Consider the following 804-residue polypeptide: Protein-lysine N-methyltransferase SMYD4 (804 aa).

112–114 (RSA) provides a ligand contact to S-adenosyl-L-methionine. The SET domain occupies 233 to 574 (SSIGLCVDPL…KGQEILHCYG (342 aa)). Zn(2+) is bound by residues Cys-296, Cys-299, Cys-309, Cys-312, Cys-318, Cys-322, His-331, and Cys-335. The segment at 296–335 (CHRCLKHTLATVPCDGCSYAKYCSQECLQQAWELYHRTEC) adopts an MYND-type zinc-finger fold. S-adenosyl-L-methionine-binding positions include Asn-427, 539 to 540 (NH), Tyr-573, and Phe-595.

This sequence belongs to the class V-like SAM-binding methyltransferase superfamily. As to quaternary structure, interacts (via MYND-type zinc finger) with HDAC1.

It is found in the nucleus. Its subcellular location is the cytoplasm. The catalysed reaction is L-lysyl-[protein] + S-adenosyl-L-methionine = N(6)-methyl-L-lysyl-[protein] + S-adenosyl-L-homocysteine + H(+). Functionally, protein-lysine N-methyltransferase. Monomethylates PRMT5, modulating its transcriptional activity. May also act as a histone methyltransferase. Plays a critical role in cardiac development. Acts as a key epigenetic regulator of gene expression during cardiac development via its dual activities as a methyltransferase and negative regulator of HDAC1. In Homo sapiens (Human), this protein is Protein-lysine N-methyltransferase SMYD4.